Consider the following 1088-residue polypeptide: RNA-directed RNA polymerase (1088 aa).

A RdRp catalytic domain is found at 501–687 (LSYGDVTRFL…AKRYIAGGKI (187 aa)).

Belongs to the reoviridae RNA-directed RNA polymerase family. Interacts with VP3 (Potential). Interacts with VP2; this interaction activates VP1. Interacts with NSP5; this interaction is probably necessary for the formation of functional virus factories. Interacts with NSP2; this interaction is weak. It depends on Mg(2+) as a cofactor.

Its subcellular location is the virion. The enzyme catalyses RNA(n) + a ribonucleoside 5'-triphosphate = RNA(n+1) + diphosphate. Its function is as follows. RNA-directed RNA polymerase that is involved in both transcription and genome replication. Together with VP3 capping enzyme, forms an enzyme complex positioned near the channels situated at each of the five-fold vertices of the core. Following infection, the outermost layer of the virus is lost, leaving a double-layered particle (DLP) made up of the core and VP6 shell. VP1 then catalyzes the transcription of fully conservative plus-strand genomic RNAs that are extruded through the DLP's channels into the cytoplasm where they function as mRNAs for translation of viral proteins. One copy of each of the viral (+)RNAs is also recruited during core assembly, together with newly synthesized polymerase complexes and VP2. The polymerase of these novo-formed particles catalyzes the synthesis of complementary minus-strands leading to dsRNA formation. To do so, the polymerase specifically recognizes and binds 4 bases 5'-UGUG-3' in the conserved 3'-sequence of plus-strand RNA templates. VP2 presumably activates the autoinhibited VP1-RNA complex to coordinate packaging and genome replication. Once dsRNA synthesis is complete, the polymerase switches to the transcriptional mode, thus providing secondary transcription. This Rotavirus A (strain RVA/Human/United States/Wa/1974/G1P1A[8]) (RV-A) protein is RNA-directed RNA polymerase.